A 505-amino-acid chain; its full sequence is Maturase K (505 aa).

This sequence belongs to the intron maturase 2 family. MatK subfamily.

The protein resides in the plastid. The protein localises to the chloroplast. Its function is as follows. Usually encoded in the trnK tRNA gene intron. Probably assists in splicing its own and other chloroplast group II introns. This is Maturase K from Nuphar advena (Common spatterdock).